Reading from the N-terminus, the 224-residue chain is 7-cyano-7-deazaguanine synthase (224 aa).

8–18 (VSGGADSATVL) serves as a coordination point for ATP. Zn(2+) is bound by residues cysteine 189, cysteine 199, cysteine 202, and cysteine 205.

This sequence belongs to the QueC family. Requires Zn(2+) as cofactor.

It carries out the reaction 7-carboxy-7-deazaguanine + NH4(+) + ATP = 7-cyano-7-deazaguanine + ADP + phosphate + H2O + H(+). It participates in purine metabolism; 7-cyano-7-deazaguanine biosynthesis. Its function is as follows. Catalyzes the ATP-dependent conversion of 7-carboxy-7-deazaguanine (CDG) to 7-cyano-7-deazaguanine (preQ(0)). This Rickettsia felis (strain ATCC VR-1525 / URRWXCal2) (Rickettsia azadi) protein is 7-cyano-7-deazaguanine synthase.